A 228-amino-acid chain; its full sequence is Vacuolar-sorting protein snf7 (228 aa).

2 coiled-coil regions span residues 25-94 (ILGL…QINA) and 125-226 (EKVD…QAEM).

Belongs to the SNF7 family. In terms of assembly, a component of the endosomal sorting required for transport complex III (ESCRT-III).

It localises to the cytoplasm. Its subcellular location is the endosome membrane. Required for the sorting and concentration of proteins resulting in the entry of these proteins into the invaginating vesicles of the multivesicular body (MVB). Also required for the proteolytic cleavage of the transcription factor pacc-1 in response to alkaline ambient pH. In Neurospora crassa (strain ATCC 24698 / 74-OR23-1A / CBS 708.71 / DSM 1257 / FGSC 987), this protein is Vacuolar-sorting protein snf7 (vsp-3).